The primary structure comprises 746 residues: Histone-lysine N-methyltransferase EZH2 (746 aa).

The segment at 1–340 (MGQTGKKSEK…AKEFAAALTA (340 aa)) is interaction with DNMT1, DNMT3A and DNMT3B. A Phosphoserine; by PKB/AKT1 modification is found at S21. An interaction with EED region spans residues 39–68 (KSMFSSNRQKILERTEILNQEWKQRRIQPV). S75 carries O-linked (GlcNAc) serine glycosylation. S76 carries the phosphoserine modification. The disordered stretch occupies residues 180 to 222 (QYNDDDDDDDGDDPEEREEKQKDLEDHRDDKESRPPRKFPSDK). Over residues 182 to 195 (NDDDDDDDGDDPEE) the composition is skewed to acidic residues. Residues 196–222 (REEKQKDLEDHRDDKESRPPRKFPSDK) show a composition bias toward basic and acidic residues. Residues 329–522 (EGAKEFAAAL…SSNHVYNYQP (194 aa)) are interaction with CDYL. T339 carries the phosphothreonine modification. A disordered region spans residues 340 to 426 (AERIKTPPKR…PIKMKPNIEP (87 aa)). T345 carries the phosphothreonine; by CDK1 and CDK2 modification. Over residues 345–357 (TPPKRPGGRRRGR) the composition is skewed to basic residues. A phosphoserine mark is found at S363 and S366. At T367 the chain carries Phosphothreonine. Residues 374–385 (ESKDTDSDREAG) are compositionally biased toward basic and acidic residues. T487 is subject to Phosphothreonine. The CXC domain occupies 503–605 (CRKIQLKKDG…SKNVSCKNCS (103 aa)). The SET domain occupies 612–727 (KHLLLAPSDV…TGEELFFDYR (116 aa)). A Glycyl lysine isopeptide (Lys-Gly) (interchain with G-Cter in SUMO2) cross-link involves residue K634.

The protein belongs to the class V-like SAM-binding methyltransferase superfamily. Histone-lysine methyltransferase family. EZ subfamily. As to quaternary structure, component of the PRC2/EED-EZH2 complex, which includes EED, EZH2, SUZ12, RBBP4 and RBBP7 and possibly AEBP2. The minimum components required for methyltransferase activity of the PRC2/EED-EZH2 complex are EED, EZH2 and SUZ12. The PRC2 complex may also interact with DNMT1, DNMT3A, DNMT3B and PHF1 via the EZH2 subunit and with SIRT1 via the SUZ12 subunit. Interacts with HDAC1 and HDAC2. Binds ATRX via the SET domain. Interacts with PRAME. Interacts with CDYL. Interacts with CLOCK, BMAL1 and CRY1. Interacts with DNMT3L; the interaction is direct. Interacts with EZHIP; the interaction blocks EZH2 methyltransferase activity. Interacts with ZNF263; recruited to the SIX3 promoter along with other proteins involved in chromatin modification and transcriptional corepression where it contributes to transcriptional repression. Interacts with ARMC12. Interacts with ZMYND8; the interaction is dependent on the presence of chromatin. Interacts with DDX18; this interaction inhibits the PRC2 complex. Post-translationally, phosphorylated by AKT1. Phosphorylation by AKT1 reduces methyltransferase activity. Phosphorylation at Thr-345 by CDK1 and CDK2 promotes maintenance of H3K27me3 levels at EZH2-target loci, thus leading to epigenetic gene silencing. In terms of processing, sumoylated. Glycosylated: O-GlcNAcylation at Ser-75 by OGT increases stability of EZH2 and facilitates the formation of H3K27me3 by the PRC2/EED-EZH2 complex. In terms of tissue distribution, in the ovary, expressed in primordial follicles and oocytes and also in external follicle cells (at protein level). Expressed in many tissues. Overexpressed in numerous tumor types including carcinomas of the breast, colon, larynx, lymphoma and testis.

It localises to the nucleus. The catalysed reaction is L-lysyl(27)-[histone H3] + 3 S-adenosyl-L-methionine = N(6),N(6),N(6)-trimethyl-L-lysyl(27)-[histone H3] + 3 S-adenosyl-L-homocysteine + 3 H(+). Its function is as follows. Polycomb group (PcG) protein. Catalytic subunit of the PRC2/EED-EZH2 complex, which methylates 'Lys-9' (H3K9me) and 'Lys-27' (H3K27me) of histone H3, leading to transcriptional repression of the affected target gene. Able to mono-, di- and trimethylate 'Lys-27' of histone H3 to form H3K27me1, H3K27me2 and H3K27me3, respectively. Displays a preference for substrates with less methylation, loses activity when progressively more methyl groups are incorporated into H3K27, H3K27me0 &gt; H3K27me1 &gt; H3K27me2. Compared to EZH1-containing complexes, it is more abundant in embryonic stem cells and plays a major role in forming H3K27me3, which is required for embryonic stem cell identity and proper differentiation. The PRC2/EED-EZH2 complex may also serve as a recruiting platform for DNA methyltransferases, thereby linking two epigenetic repression systems. Genes repressed by the PRC2/EED-EZH2 complex include HOXC8, HOXA9, MYT1, CDKN2A and retinoic acid target genes. EZH2 can also methylate non-histone proteins such as the transcription factor GATA4 and the nuclear receptor RORA. Regulates the circadian clock via histone methylation at the promoter of the circadian genes. Essential for the CRY1/2-mediated repression of the transcriptional activation of PER1/2 by the CLOCK-BMAL1 heterodimer; involved in the di and trimethylation of 'Lys-27' of histone H3 on PER1/2 promoters which is necessary for the CRY1/2 proteins to inhibit transcription. The chain is Histone-lysine N-methyltransferase EZH2 from Homo sapiens (Human).